The chain runs to 352 residues: Uroporphyrinogen decarboxylase (352 aa).

Substrate contacts are provided by residues 26-30 (RQAGR), D76, Y153, S208, and H323.

The protein belongs to the uroporphyrinogen decarboxylase family. As to quaternary structure, homodimer.

It localises to the cytoplasm. The catalysed reaction is uroporphyrinogen III + 4 H(+) = coproporphyrinogen III + 4 CO2. It participates in porphyrin-containing compound metabolism; protoporphyrin-IX biosynthesis; coproporphyrinogen-III from 5-aminolevulinate: step 4/4. In terms of biological role, catalyzes the decarboxylation of four acetate groups of uroporphyrinogen-III to yield coproporphyrinogen-III. This Synechococcus sp. (strain CC9902) protein is Uroporphyrinogen decarboxylase.